The chain runs to 255 residues: Post-GPI attachment to proteins factor 2 (255 aa).

5 helical membrane-spanning segments follow: residues Leu23–Leu43, Leu111–Phe131, Asn143–Asn163, Leu185–Ser205, and Ala209–Phe229.

This sequence belongs to the PGAP2 family.

Its subcellular location is the golgi apparatus membrane. It localises to the endoplasmic reticulum membrane. Functionally, involved in the lipid remodeling steps of GPI-anchor maturation. Required for stable expression of GPI-anchored proteins at the cell surface. In Drosophila melanogaster (Fruit fly), this protein is Post-GPI attachment to proteins factor 2.